The following is a 226-amino-acid chain: MEPKHPEITIVLATGNKDKVRELKPVLEALASGIHVRSLHDLGLDIDVEETEPTLEGNARLKADAIFELVAPRLDWFIALADDTGLEVDALGGAPGVYSARYAPVPEGVARTYEDNVRHLLSEMRGKSKRTARFRTVIAMKGRLPAANGSAVEIEETTDGHIDGLITTEPKGNGGFGYDPVFAPEGMDRTFAQLGIDEKNAISHRGRAVVAAAKRIGEYLSQCGIQ.

14-19 contacts substrate; it reads TGNKDK. E49 and D83 together coordinate Mg(2+). Residue D83 is the Proton acceptor of the active site. Residues T84, 176–179, K199, and 204–205 each bind substrate; these read FGYD and HR.

The protein belongs to the HAM1 NTPase family. Homodimer. Requires Mg(2+) as cofactor.

It carries out the reaction XTP + H2O = XMP + diphosphate + H(+). It catalyses the reaction dITP + H2O = dIMP + diphosphate + H(+). The catalysed reaction is ITP + H2O = IMP + diphosphate + H(+). Functionally, pyrophosphatase that catalyzes the hydrolysis of nucleoside triphosphates to their monophosphate derivatives, with a high preference for the non-canonical purine nucleotides XTP (xanthosine triphosphate), dITP (deoxyinosine triphosphate) and ITP. Seems to function as a house-cleaning enzyme that removes non-canonical purine nucleotides from the nucleotide pool, thus preventing their incorporation into DNA/RNA and avoiding chromosomal lesions. The protein is dITP/XTP pyrophosphatase of Chlorobaculum tepidum (strain ATCC 49652 / DSM 12025 / NBRC 103806 / TLS) (Chlorobium tepidum).